We begin with the raw amino-acid sequence, 860 residues long: Leucine--tRNA ligase (860 aa).

The 'HIGH' region signature appears at 42–52 (PYPSGRLHMGH). The short motif at 619-623 (KMSKS) is the 'KMSKS' region element. K622 serves as a coordination point for ATP.

This sequence belongs to the class-I aminoacyl-tRNA synthetase family.

The protein localises to the cytoplasm. The enzyme catalyses tRNA(Leu) + L-leucine + ATP = L-leucyl-tRNA(Leu) + AMP + diphosphate. The protein is Leucine--tRNA ligase of Salmonella paratyphi B (strain ATCC BAA-1250 / SPB7).